The primary structure comprises 67 residues: Large ribosomal subunit protein bL31 (67 aa).

Zn(2+)-binding residues include Cys-16, Cys-18, Cys-36, and Cys-39.

This sequence belongs to the bacterial ribosomal protein bL31 family. Type A subfamily. In terms of assembly, part of the 50S ribosomal subunit. Requires Zn(2+) as cofactor.

Its function is as follows. Binds the 23S rRNA. In Syntrophomonas wolfei subsp. wolfei (strain DSM 2245B / Goettingen), this protein is Large ribosomal subunit protein bL31.